The chain runs to 382 residues: Alanine racemase 1 (382 aa).

Lys-39 acts as the Proton acceptor; specific for D-alanine in catalysis. N6-(pyridoxal phosphate)lysine is present on Lys-39. Position 138 (Arg-138) interacts with substrate. The active-site Proton acceptor; specific for L-alanine is the Tyr-265. Position 312 (Met-312) interacts with substrate.

The protein belongs to the alanine racemase family. Pyridoxal 5'-phosphate serves as cofactor.

It catalyses the reaction L-alanine = D-alanine. It participates in amino-acid biosynthesis; D-alanine biosynthesis; D-alanine from L-alanine: step 1/1. Its function is as follows. Catalyzes the interconversion of L-alanine and D-alanine. May also act on other amino acids. This chain is Alanine racemase 1 (alr1), found in Staphylococcus aureus (strain MRSA252).